A 75-amino-acid chain; its full sequence is ATP synthase subunit c (75 aa).

2 helical membrane-spanning segments follow: residues 4–24 and 54–74; these read GLIA…GLGQ and AVAE…MFAF.

This sequence belongs to the ATPase C chain family. In terms of assembly, F-type ATPases have 2 components, F(1) - the catalytic core - and F(0) - the membrane proton channel. F(1) has five subunits: alpha(3), beta(3), gamma(1), delta(1), epsilon(1). F(0) has three main subunits: a(1), b(2) and c(10-14). The alpha and beta chains form an alternating ring which encloses part of the gamma chain. F(1) is attached to F(0) by a central stalk formed by the gamma and epsilon chains, while a peripheral stalk is formed by the delta and b chains.

The protein resides in the cell membrane. F(1)F(0) ATP synthase produces ATP from ADP in the presence of a proton or sodium gradient. F-type ATPases consist of two structural domains, F(1) containing the extramembraneous catalytic core and F(0) containing the membrane proton channel, linked together by a central stalk and a peripheral stalk. During catalysis, ATP synthesis in the catalytic domain of F(1) is coupled via a rotary mechanism of the central stalk subunits to proton translocation. Its function is as follows. Key component of the F(0) channel; it plays a direct role in translocation across the membrane. A homomeric c-ring of between 10-14 subunits forms the central stalk rotor element with the F(1) delta and epsilon subunits. The polypeptide is ATP synthase subunit c (Mycoplasmopsis agalactiae (strain NCTC 10123 / CIP 59.7 / PG2) (Mycoplasma agalactiae)).